The following is a 52-amino-acid chain: ATP synthase protein 8 (52 aa).

Residues 7–23 (MMWFSLFIMFSMTMMLF) traverse the membrane as a helical segment.

The protein belongs to the ATPase protein 8 family. As to quaternary structure, F-type ATPases have 2 components, CF(1) - the catalytic core - and CF(0) - the membrane proton channel.

It is found in the mitochondrion membrane. Its function is as follows. Mitochondrial membrane ATP synthase (F(1)F(0) ATP synthase or Complex V) produces ATP from ADP in the presence of a proton gradient across the membrane which is generated by electron transport complexes of the respiratory chain. F-type ATPases consist of two structural domains, F(1) - containing the extramembraneous catalytic core and F(0) - containing the membrane proton channel, linked together by a central stalk and a peripheral stalk. During catalysis, ATP synthesis in the catalytic domain of F(1) is coupled via a rotary mechanism of the central stalk subunits to proton translocation. Part of the complex F(0) domain. Minor subunit located with subunit a in the membrane. This Locusta migratoria (Migratory locust) protein is ATP synthase protein 8 (MT-ATP8).